Here is a 115-residue protein sequence, read N- to C-terminus: Large ribosomal subunit protein uL22 (115 aa).

Belongs to the universal ribosomal protein uL22 family. Part of the 50S ribosomal subunit.

This protein binds specifically to 23S rRNA; its binding is stimulated by other ribosomal proteins, e.g. L4, L17, and L20. It is important during the early stages of 50S assembly. It makes multiple contacts with different domains of the 23S rRNA in the assembled 50S subunit and ribosome. Its function is as follows. The globular domain of the protein is located near the polypeptide exit tunnel on the outside of the subunit, while an extended beta-hairpin is found that lines the wall of the exit tunnel in the center of the 70S ribosome. In Streptomyces avermitilis (strain ATCC 31267 / DSM 46492 / JCM 5070 / NBRC 14893 / NCIMB 12804 / NRRL 8165 / MA-4680), this protein is Large ribosomal subunit protein uL22.